The following is a 565-amino-acid chain: uncharacterized protein (565 aa).

13 helical membrane passes run 8 to 28, 43 to 63, 95 to 115, 137 to 157, 167 to 187, 227 to 247, 268 to 288, 314 to 334, 367 to 387, 424 to 444, 460 to 480, 482 to 502, and 516 to 536; these read ISFI…GIFF, LAIF…LALI, MTYL…ICSI, WLIW…IPPL, MVVS…GFIV, FTGI…FFAY, WALF…AVAL, IVFG…INGF, VVGV…FTVI, ATWT…GAIV, FLPA…VTII, PFIN…TVLG, and VMLI…VYVE.

It to M.pneumoniae MPN_095 and MPN_096.

It localises to the cell membrane. This is an uncharacterized protein from Mycoplasma pneumoniae (strain ATCC 29342 / M129 / Subtype 1) (Mycoplasmoides pneumoniae).